We begin with the raw amino-acid sequence, 329 residues long: Serpentine receptor class alpha-4 (329 aa).

The next 6 helical transmembrane spans lie at 25-45 (IIVL…IKVV), 103-123 (LYLE…TGLL), 144-164 (GLAI…LIIW), 188-208 (YFQS…ILIW), 238-258 (ICFL…GFFI), and 273-293 (LVAV…ILIF).

The protein belongs to the nematode receptor-like protein sra family.

The protein resides in the membrane. The polypeptide is Serpentine receptor class alpha-4 (sra-4) (Caenorhabditis elegans).